We begin with the raw amino-acid sequence, 372 residues long: 4-hydroxy-3-methylbut-2-en-1-yl diphosphate synthase (flavodoxin) (372 aa).

Cys-270, Cys-273, Cys-305, and Glu-312 together coordinate [4Fe-4S] cluster.

The protein belongs to the IspG family. Requires [4Fe-4S] cluster as cofactor.

It catalyses the reaction (2E)-4-hydroxy-3-methylbut-2-enyl diphosphate + oxidized [flavodoxin] + H2O + 2 H(+) = 2-C-methyl-D-erythritol 2,4-cyclic diphosphate + reduced [flavodoxin]. It participates in isoprenoid biosynthesis; isopentenyl diphosphate biosynthesis via DXP pathway; isopentenyl diphosphate from 1-deoxy-D-xylulose 5-phosphate: step 5/6. Converts 2C-methyl-D-erythritol 2,4-cyclodiphosphate (ME-2,4cPP) into 1-hydroxy-2-methyl-2-(E)-butenyl 4-diphosphate. The polypeptide is 4-hydroxy-3-methylbut-2-en-1-yl diphosphate synthase (flavodoxin) (Marinobacter nauticus (strain ATCC 700491 / DSM 11845 / VT8) (Marinobacter aquaeolei)).